A 211-amino-acid polypeptide reads, in one-letter code: Holliday junction branch migration complex subunit RuvA (211 aa).

The domain I stretch occupies residues 1 to 70; sequence MIQFLQGQVV…QDQIALFGFG (70 aa). Positions 71–149 are domain II; sequence RLAERDLFGQ…QWHKLQMGTG (79 aa). Residues 150–158 are flexible linker; that stretch reads ETDSTLPTT. The domain III stretch occupies residues 158-211; it reads TALLEDLEMTLLALGYTQTEIQQAIAMVSQVPDVAQSEDPEVWIRQAIGWLSDH.

It belongs to the RuvA family. As to quaternary structure, homotetramer. Forms an RuvA(8)-RuvB(12)-Holliday junction (HJ) complex. HJ DNA is sandwiched between 2 RuvA tetramers; dsDNA enters through RuvA and exits via RuvB. An RuvB hexamer assembles on each DNA strand where it exits the tetramer. Each RuvB hexamer is contacted by two RuvA subunits (via domain III) on 2 adjacent RuvB subunits; this complex drives branch migration. In the full resolvosome a probable DNA-RuvA(4)-RuvB(12)-RuvC(2) complex forms which resolves the HJ.

It localises to the cytoplasm. In terms of biological role, the RuvA-RuvB-RuvC complex processes Holliday junction (HJ) DNA during genetic recombination and DNA repair, while the RuvA-RuvB complex plays an important role in the rescue of blocked DNA replication forks via replication fork reversal (RFR). RuvA specifically binds to HJ cruciform DNA, conferring on it an open structure. The RuvB hexamer acts as an ATP-dependent pump, pulling dsDNA into and through the RuvAB complex. HJ branch migration allows RuvC to scan DNA until it finds its consensus sequence, where it cleaves and resolves the cruciform DNA. The polypeptide is Holliday junction branch migration complex subunit RuvA (Synechocystis sp. (strain ATCC 27184 / PCC 6803 / Kazusa)).